Here is a 391-residue protein sequence, read N- to C-terminus: Histamine H4 receptor (391 aa).

Over Met1 to Ala19 the chain is Extracellular. An N-linked (GlcNAc...) asparagine glycan is attached at Asn5. Residues Phe20 to Phe40 form a helical membrane-spanning segment. Topologically, residues Val41–Tyr52 are cytoplasmic. Residues Phe53–Ile73 form a helical membrane-spanning segment. Residues Pro74 to Cys87 are Extracellular-facing. Cys87 and Cys166 form a disulfide bridge. Residues Met88–Ile108 traverse the membrane as a helical segment. Over Ser109–Lys131 the chain is Cytoplasmic. A helical membrane pass occupies residues Ile132 to Leu152. Residues Ala153–Trp174 lie on the Extracellular side of the membrane. N-linked (GlcNAc...) asparagine glycosylation occurs at Asn159. Residues Tyr175 to Phe195 form a helical membrane-spanning segment. The Cytoplasmic portion of the chain corresponds to Asn196 to Ser306. Positions Thr238–Lys258 are disordered. The segment covering Ala247–Arg256 has biased composition (basic and acidic residues). The chain crosses the membrane as a helical span at residues Leu307–Val327. The Extracellular segment spans residues Leu328–Ser343. The helical transmembrane segment at Ile344–His364 threads the bilayer. At Arg365–Ser391 the chain is on the cytoplasmic side.

Belongs to the G-protein coupled receptor 1 family. As to quaternary structure, interacts with TSPAN4.

It localises to the cell membrane. In terms of biological role, the H4 subclass of histamine receptors could mediate the histamine signals in peripheral tissues. Displays a significant level of constitutive activity (spontaneous activity in the absence of agonist). The chain is Histamine H4 receptor (Hrh4) from Mus musculus (Mouse).